Here is a 706-residue protein sequence, read N- to C-terminus: Elongation factor G (706 aa).

A tr-type G domain is found at 8–290 (KRYRNIGIVA…GVIEYMPSPT (283 aa)). GTP-binding positions include 17–24 (AHVDAGKT), 88–92 (DTPGH), and 142–145 (NKMD).

Belongs to the TRAFAC class translation factor GTPase superfamily. Classic translation factor GTPase family. EF-G/EF-2 subfamily.

The protein localises to the cytoplasm. In terms of biological role, catalyzes the GTP-dependent ribosomal translocation step during translation elongation. During this step, the ribosome changes from the pre-translocational (PRE) to the post-translocational (POST) state as the newly formed A-site-bound peptidyl-tRNA and P-site-bound deacylated tRNA move to the P and E sites, respectively. Catalyzes the coordinated movement of the two tRNA molecules, the mRNA and conformational changes in the ribosome. The polypeptide is Elongation factor G (Chromohalobacter salexigens (strain ATCC BAA-138 / DSM 3043 / CIP 106854 / NCIMB 13768 / 1H11)).